Here is a 357-residue protein sequence, read N- to C-terminus: Probable cinnamyl alcohol dehydrogenase (357 aa).

Cys-47 is a Zn(2+) binding site. Residue Ser-49 coordinates NADP(+). The Zn(2+) site is built by His-69, Glu-70, Cys-100, Cys-103, Cys-106, Cys-114, and Cys-163. NADP(+) contacts are provided by residues Thr-167, 188 to 193, 211 to 216, Thr-251, Gly-275, and 298 to 300; these read GLGGVG, SSSDKK, and SFI.

It belongs to the zinc-containing alcohol dehydrogenase family. As to quaternary structure, homodimer. It depends on Zn(2+) as a cofactor.

It catalyses the reaction (E)-cinnamyl alcohol + NADP(+) = (E)-cinnamaldehyde + NADPH + H(+). The enzyme catalyses (E)-coniferol + NADP(+) = (E)-coniferaldehyde + NADPH + H(+). The catalysed reaction is (E)-sinapyl alcohol + NADP(+) = (E)-sinapaldehyde + NADPH + H(+). It carries out the reaction (E)-4-coumaroyl alcohol + NADP(+) = (E)-4-coumaraldehyde + NADPH + H(+). It catalyses the reaction (E)-caffeyl alcohol + NADP(+) = (E)-caffeyl aldehyde + NADPH + H(+). It functions in the pathway aromatic compound metabolism; phenylpropanoid biosynthesis. Involved in lignin biosynthesis. Catalyzes the final step specific for the production of lignin monomers. Catalyzes the NADPH-dependent reduction of coniferaldehyde, 5-hydroxyconiferaldehyde, sinapaldehyde, 4-coumaraldehyde and caffeyl aldehyde to their respective alcohols. The sequence is that of Probable cinnamyl alcohol dehydrogenase from Pinus taeda (Loblolly pine).